Here is a 707-residue protein sequence, read N- to C-terminus: MDYSYDLEEVVEETIDYKDPCKAAAFWGDIALDEEDLANFKIDRIVDLTKHTIHTVSGAATNISRPEKGRRTRKERRRSREKRASTSRPERVWPDGVIPYVISGNFSGSQRAIFRQAMRHWEKHTCVTFLERTDEDSYIVFTYRPCGCCSYVGRRGGGPQAISIGKNCDKFGIVVHELGHVIGFWHEHTRPDRDDHVSIIRENIQPGQEYNFLKMEPEEVESLGETYDFDSIMHYARNTFSRGIFLDTILPKYDVNGVRPPIGQRTRLSSGDVAQARKLYKCPACGETLQDSQGNFSSPGFPNGYSAYMHCVWRLSVTPGEKIILNFTSLDLYRSRLCWYDYIEVRDGFWKKAPLRGRFCGDKIPESIISTESRLWIEFRSSSNWVGKGFQAVYEALCGGEVKKDSGHIQSPNYPDDYRPNKACVWKLSVSEGFHVGISFQSFEIERHDSCAYDYLEIRDGSSETSPLVGRFCGYDKPDDIKSSTNQLWIKFVSDGSINKAGFSLNYFKEVDECSRPNNGGCEQRCVNTLGSYKCACDPGYELGQDKKSCEAACGGFLTKLNGSINSPGWPKEYPPNKNCIWQLVAPTQYRISLKFDQFETEGNDVCKYDFVEVRSGLTSDSKLHGKFCGSELPAVITSQYNNMRIEFKSDNTVSKKGFQANFFSEKKNNIQKLQQLNEVNRGQQNQAPKRVRPRMRLRTVKKTRPP.

Residues 57–90 (SGAATNISRPEKGRRTRKERRRSREKRASTSRPE) are disordered. N-linked (GlcNAc...) asparagine glycosylation is present at Asn-62. Residues 68-81 (KGRRTRKERRRSRE) show a composition bias toward basic residues. Positions 84–283 (ASTSRPERVW…AQARKLYKCP (200 aa)) constitute a Peptidase M12A domain. A glycan (N-linked (GlcNAc...) asparagine) is linked at Asn-105. 4 disulfides stabilise this stretch: Cys-126–Cys-282, Cys-146–Cys-168, Cys-148–Cys-149, and Cys-285–Cys-311. His-176 contacts Zn(2+). Residue Glu-177 is part of the active site. Positions 180 and 186 each coordinate Zn(2+). CUB domains lie at 285–397 (CGET…YEAL) and 398–509 (CGGE…NYFK). Asn-295 and Asn-326 each carry an N-linked (GlcNAc...) asparagine glycan. 8 disulfide bridges follow: Cys-338–Cys-360, Cys-398–Cys-424, Cys-451–Cys-473, Cys-514–Cys-526, Cys-522–Cys-535, Cys-537–Cys-550, Cys-554–Cys-580, and Cys-607–Cys-629. An EGF-like; calcium-binding domain is found at 510–551 (EVDECSRPNNGGCEQRCVNTLGSYKCACDPGYELGQDKKSCE). The CUB 3 domain occupies 554 to 666 (CGGFLTKLNG…KGFQANFFSE (113 aa)). The N-linked (GlcNAc...) asparagine glycan is linked to Asn-562. Positions 682-707 (RGQQNQAPKRVRPRMRLRTVKKTRPP) are disordered. Over residues 690 to 707 (KRVRPRMRLRTVKKTRPP) the composition is skewed to basic residues.

Interacts with olfml3/ont1. It depends on Zn(2+) as a cofactor. Proteolytically activated in the trans-Golgi network by furin-like/paired basic proprotein convertases, cleavage is not required for secretion.

Its subcellular location is the golgi apparatus. The protein resides in the trans-Golgi network. The protein localises to the secreted. It is found in the extracellular space. It localises to the extracellular matrix. Functionally, metalloprotease involved in pattern formation in gastrula and later differentiation of developing organs. Able to cleave chordin (chrd), suggesting that it may act in dorsoventral patterning during early development by regulating the chordin (chrd) activity. This Xenopus laevis (African clawed frog) protein is Bone morphogenetic protein 1 (bmp1).